A 178-amino-acid polypeptide reads, in one-letter code: Large ribosomal subunit protein bL25 (178 aa).

Belongs to the bacterial ribosomal protein bL25 family. CTC subfamily. In terms of assembly, part of the 50S ribosomal subunit; part of the 5S rRNA/L5/L18/L25 subcomplex. Contacts the 5S rRNA. Binds to the 5S rRNA independently of L5 and L18.

This is one of the proteins that binds to the 5S RNA in the ribosome where it forms part of the central protuberance. This is Large ribosomal subunit protein bL25 from Sulfurimonas denitrificans (strain ATCC 33889 / DSM 1251) (Thiomicrospira denitrificans (strain ATCC 33889 / DSM 1251)).